A 250-amino-acid chain; its full sequence is Small ribosomal subunit protein uS2 (250 aa).

Belongs to the universal ribosomal protein uS2 family.

The chain is Small ribosomal subunit protein uS2 from Teredinibacter turnerae (strain ATCC 39867 / T7901).